A 273-amino-acid polypeptide reads, in one-letter code: 3-methyl-2-oxobutanoate hydroxymethyltransferase 1 (273 aa).

Residues D49 and D88 each coordinate Mg(2+). Residues 49-50 (DS), D88, and K118 each bind 3-methyl-2-oxobutanoate. E120 contacts Mg(2+). The active-site Proton acceptor is the E187.

The protein belongs to the PanB family. As to quaternary structure, homodecamer; pentamer of dimers. Mg(2+) serves as cofactor.

The protein resides in the cytoplasm. The enzyme catalyses 3-methyl-2-oxobutanoate + (6R)-5,10-methylene-5,6,7,8-tetrahydrofolate + H2O = 2-dehydropantoate + (6S)-5,6,7,8-tetrahydrofolate. The protein operates within cofactor biosynthesis; (R)-pantothenate biosynthesis; (R)-pantoate from 3-methyl-2-oxobutanoate: step 1/2. In terms of biological role, catalyzes the reversible reaction in which hydroxymethyl group from 5,10-methylenetetrahydrofolate is transferred onto alpha-ketoisovalerate to form ketopantoate. The chain is 3-methyl-2-oxobutanoate hydroxymethyltransferase 1 from Pseudomonas aeruginosa (strain UCBPP-PA14).